Consider the following 1367-residue polypeptide: Histone acetyltransferase HAC2 (1367 aa).

Residues 110–151 (TSSIPGSSGSASETNSGSDITKQDFKNDSPSDSKKVQGSSTS) form a disordered region. Over residues 111-127 (SSIPGSSGSASETNSGS) the composition is skewed to low complexity. Over residues 130-144 (TKQDFKNDSPSDSKK) the composition is skewed to basic and acidic residues. 12 tandem repeats follow at residues 188 to 200 (KLGT…EPMK), 223 to 235 (KVYS…TTTK), 251 to 263 (KLGT…EPMK), 286 to 298 (KVYS…TTTK), 314 to 326 (KLGT…EPMK), 349 to 361 (KVYS…TTTK), 377 to 389 (KLGT…EPMK), 418 to 430 (KLGT…EPMK), 432 to 444 (DEGS…TTNK), 459 to 471 (KLGI…EPMK), 473 to 485 (DEGT…TTNK), and 500 to 512 (KLGI…EPMK). A 12 X 13 AA approximate repeats region spans residues 188–512 (KLGTVVDIVE…IGVDIVEPMK (325 aa)). The segment at 688–765 (HQICSPCHSR…EYICPTCLLE (78 aa)) adopts a PHD-type zinc-finger fold. The 434-residue stretch at 780–1213 (DSGAKDLPET…ILHHLHTSNK (434 aa)) folds into the CBP/p300-type HAT domain. Acetyl-CoA contacts are provided by residues 903 to 905 (LDS), 922 to 923 (RT), and Trp978. The ZZ-type 1; degenerate zinc-finger motif lies at 1094–1157 (ELNYSCTRCS…QLSKVQVNGV (64 aa)). Cys1099, Cys1102, Cys1123, Cys1126, Cys1225, Cys1228, Cys1240, Cys1243, Cys1249, Cys1252, His1261, and His1263 together coordinate Zn(2+). A ZZ-type 2 zinc finger spans residues 1220 to 1273 (SSSLTCTACKKDVSTTIYFPCLLCPDYRACTGCYTKNRTLRHLHIFPTLPSANR). A TAZ-type zinc finger spans residues 1274–1359 (APSRTVMVLE…NCPVPQCRDR (86 aa)).

As to expression, rosette leaves, stems and flowers.

The protein resides in the nucleus. The catalysed reaction is L-lysyl-[protein] + acetyl-CoA = N(6)-acetyl-L-lysyl-[protein] + CoA + H(+). Its function is as follows. Acetyltransferase enzyme. Acetylates histones, giving a specific tag for transcriptional activation. No acetyltransferase activity found in vitro. This is Histone acetyltransferase HAC2 (HAC2) from Arabidopsis thaliana (Mouse-ear cress).